The chain runs to 332 residues: 2,3-diketo-L-gulonate reductase (332 aa).

His44 (proton donor) is an active-site residue. NAD(+) is bound by residues 168 to 174 (ITMVDMS), 224 to 225 (WK), and 304 to 306 (GHE).

It belongs to the LDH2/MDH2 oxidoreductase family. DlgD subfamily. Homodimer.

Its subcellular location is the cytoplasm. The enzyme catalyses 3-dehydro-L-gulonate + NAD(+) = 2,3-dioxo-L-gulonate + NADH + H(+). It carries out the reaction 3-dehydro-L-gulonate + NADP(+) = 2,3-dioxo-L-gulonate + NADPH + H(+). Catalyzes the reduction of 2,3-diketo-L-gulonate in the presence of NADH, to form 3-keto-L-gulonate. The sequence is that of 2,3-diketo-L-gulonate reductase from Escherichia coli O139:H28 (strain E24377A / ETEC).